A 545-amino-acid chain; its full sequence is Probable bifunctional tRNA threonylcarbamoyladenosine biosynthesis protein (545 aa).

Residues 1–329 (MDTSKDLICI…YRSDMVEVNW (329 aa)) are kae1. Fe cation contacts are provided by His-112, His-116, and Tyr-133. L-threonylcarbamoyladenylate is bound by residues 133-137 (YVSGG), Asp-165, Gly-178, Glu-182, and Asn-262. Fe cation is bound at residue Asp-290. A Protein kinase domain is found at 344–545 (IIPEHLIGKG…KEVEKRARYL (202 aa)). Residues 350–358 (IGKGAEADI) and Lys-371 contribute to the ATP site. Asp-463 serves as the catalytic Proton acceptor; for kinase activity.

The protein in the N-terminal section; belongs to the KAE1 / TsaD family. It in the C-terminal section; belongs to the protein kinase superfamily. Tyr protein kinase family. BUD32 subfamily. As to quaternary structure, component of the KEOPS complex that consists of Kae1, Bud32, Cgi121 and Pcc1; the whole complex dimerizes. Fe(2+) serves as cofactor.

It localises to the cytoplasm. It carries out the reaction L-seryl-[protein] + ATP = O-phospho-L-seryl-[protein] + ADP + H(+). The catalysed reaction is L-threonyl-[protein] + ATP = O-phospho-L-threonyl-[protein] + ADP + H(+). The enzyme catalyses L-threonylcarbamoyladenylate + adenosine(37) in tRNA = N(6)-L-threonylcarbamoyladenosine(37) in tRNA + AMP + H(+). Functionally, required for the formation of a threonylcarbamoyl group on adenosine at position 37 (t(6)A37) in tRNAs that read codons beginning with adenine. Is a component of the KEOPS complex that is probably involved in the transfer of the threonylcarbamoyl moiety of threonylcarbamoyl-AMP (TC-AMP) to the N6 group of A37. The Kae1 domain likely plays a direct catalytic role in this reaction. The Bud32 domain probably displays kinase activity that regulates Kae1 function. The chain is Probable bifunctional tRNA threonylcarbamoyladenosine biosynthesis protein from Methanococcus maripaludis (strain C5 / ATCC BAA-1333).